The primary structure comprises 351 residues: Homoserine O-acetyltransferase (351 aa).

Positions 51–334 constitute an AB hydrolase-1 domain; the sequence is VIWVLHALTG…IYGHDAFLIE (284 aa). Ser146 (nucleophile) is an active-site residue. Residue Arg212 participates in substrate binding. Active-site residues include Asp299 and His328. Asp329 contributes to the substrate binding site.

The protein belongs to the AB hydrolase superfamily. MetX family. As to quaternary structure, homodimer.

Its subcellular location is the cytoplasm. The catalysed reaction is L-homoserine + acetyl-CoA = O-acetyl-L-homoserine + CoA. Its pathway is amino-acid biosynthesis; L-methionine biosynthesis via de novo pathway; O-acetyl-L-homoserine from L-homoserine: step 1/1. Its function is as follows. Transfers an acetyl group from acetyl-CoA to L-homoserine, forming acetyl-L-homoserine. The chain is Homoserine O-acetyltransferase from Cyclobacterium marinum (strain ATCC 25205 / DSM 745 / LMG 13164 / NCIMB 1802) (Flectobacillus marinus).